The primary structure comprises 926 residues: MKMKETLQLGKTAFPMRGNLPNREAEWQKDWEEKGLYEQRQKLNEGKPTFVLHDGPPYANGNIHLGHSLNKISKDIIIRSKSMSGFRSPYVPGWDTHGLPIEQVLTNKGVKRKEMTVAEYREKCKEYALSQVDKQRNDFKRLGVSGDWEHPYITLDPEYEAAEIRVFGKMAEKGYIYKGLKPIYWSPSSESSLAEAEIEYKDVKSPSIYVAFNVADGKGLLDNETAFVIWTTTPWTLPANLGISVNPDFTYVEVKADGRKFVIAKDLLTTVKEAIGWEEVEVLREFSGEKLDRMTAQHPFYDRTSLVMLGDHVTLDAGTGLVHTAPGHGEDDYIVSRKYDLPVISPVDSRGVFTDEAPGFEGIFYDKANPMITELLEEKGALLKLDFFTHSYPHDWRTKKPVIYRATPQWFASISKFRQDILDEVEKVDWLIPWGKTRLYNMIRDRGDWVISRQRAWGVPLPIFYAENGEAIITPETIEHVANLFAEHGSNIWFMREAKELLPAGFTHPGSPNGEFTKETDIMDVWFDSGSSHEGVLREREELTFPADMYLEGSDQYRGWFNSSITTSVAINGVAPYKSIISQGMVLDGEGRKMSKSLGNTILPEKVINQMGADILRLWVSSVDAEADVRVSMDILNQVSEVYRKIRNTMRFLLANTSDFNPAEHTVAYADLRSVDKYMTVRLNQVIQEIRENGYEKYNFMHIYRTVMNFLTVDLSSFYLDFAKDVVYIEAENDYQRRCMQTVFYQTLVSLTKLLTPIIPHTAEEIWSFLQEEEEYVQLAEFPGYETFTNEEELMDTWAAFMDFRDNVLKALEEARHSKLIGKSLEAKVTVYPNEQIRQLMTAVDADIAQLLIVSDFEVSKEVAPSEAVQFEDMAILVEKAEGETCDRCRSVRQDVGSDEKLPTLCGRCAHIVEENYPEAVAEGFE.

The segment at 1-21 is disordered; that stretch reads MKMKETLQLGKTAFPMRGNLP. The 'HIGH' region motif lies at 57-67; it reads PYANGNIHLGH. An L-isoleucyl-5'-AMP-binding site is contributed by Glu-552. Residues 593–597 carry the 'KMSKS' region motif; it reads KMSKS. An ATP-binding site is contributed by Lys-596. The Zn(2+) site is built by Cys-886, Cys-889, Cys-906, and Cys-909.

It belongs to the class-I aminoacyl-tRNA synthetase family. IleS type 1 subfamily. As to quaternary structure, monomer. Requires Zn(2+) as cofactor.

The protein resides in the cytoplasm. The enzyme catalyses tRNA(Ile) + L-isoleucine + ATP = L-isoleucyl-tRNA(Ile) + AMP + diphosphate. In terms of biological role, catalyzes the attachment of isoleucine to tRNA(Ile). As IleRS can inadvertently accommodate and process structurally similar amino acids such as valine, to avoid such errors it has two additional distinct tRNA(Ile)-dependent editing activities. One activity is designated as 'pretransfer' editing and involves the hydrolysis of activated Val-AMP. The other activity is designated 'posttransfer' editing and involves deacylation of mischarged Val-tRNA(Ile). In Enterococcus faecalis (strain ATCC 700802 / V583), this protein is Isoleucine--tRNA ligase.